We begin with the raw amino-acid sequence, 424 residues long: Putative pachytene checkpoint protein 2 (424 aa).

Residue 179–186 coordinates ATP; it reads GPPGTGKT.

Belongs to the AAA ATPase family. PCH2 subfamily.

Plays a key role in chromosome recombination during meiosis. The chain is Putative pachytene checkpoint protein 2 (pch-2) from Caenorhabditis elegans.